The sequence spans 336 residues: Solute-binding protein Csal_2479 (336 aa).

The signal sequence occupies residues 1 to 33 (MQTNKRLKMASCVKAAAMLGMLLSVSISTTAQA). Residues His-42, Gln-80, Arg-156, Arg-177, Tyr-200, 217–218 (NN), and Glu-244 each bind beta-D-glucuronate.

The protein belongs to the bacterial solute-binding protein 7 family. The complex is comprised of an extracytoplasmic solute-binding protein and a heteromeric permease formed by two transmembrane proteins.

The protein localises to the periplasm. Solute-binding protein that binds D-glucuronate (in vitro). Probably part of a tripartite ATP-independent periplasmic (TRAP) transport system that mediates solute transport into the cytoplasm. This chain is Solute-binding protein Csal_2479, found in Chromohalobacter salexigens (strain ATCC BAA-138 / DSM 3043 / CIP 106854 / NCIMB 13768 / 1H11).